A 388-amino-acid polypeptide reads, in one-letter code: Trichodiene synthase (388 aa).

Residues Asp-109, Glu-173, Asn-234, Ser-238, Glu-242, and Asp-248 each contribute to the Mg(2+) site. The interval 109 to 113 is aspartate-rich domain; it reads DDSRE.

The protein belongs to the trichodiene synthase family. It depends on Mg(2+) as a cofactor. Mn(2+) is required as a cofactor.

The catalysed reaction is (2E,6E)-farnesyl diphosphate = trichodiene + diphosphate. Its pathway is sesquiterpene biosynthesis; trichothecene biosynthesis. Trichodiene synthase; part of the gene cluster that mediates the production of the antimicrobial trichothecene harzianum A (HA) that plays a role in Botrytis cinerea antagonistic activity and plant defense priming. The biosynthesis of harzianum A begins with the cyclization of farnesyl diphosphate to trichodiene and is catalyzed by the trichodiene synthase TRI5. Trichodiene undergoes a series of oxygenations catalyzed by the cytochrome P450 monooxygenase TRI4. TRI4 controls the addition of 3 oxygens at C-2, C-11, and the C-12, C-13-epoxide to form the intermediate isotrichodiol. Isotrichodiol then undergoes a non-enzymatic isomerization and cyclization to form 12,13-epoxytrichothec-9-ene (EPT) which is further converted to trichodermol by the cytochrome P450 monooxygenase TRI11 via C-4 hydroxylation. The last step of HA synthesis is esterification of an octatriendioyl moiety to the C-4 oxygen of trichodermol. The octatriendioyl moiety is probably produced by the polyketide synthase TRI17 and the esterification performed by the trichothecene O-acetyltransferase TRI3. The sequence is that of Trichodiene synthase from Trichoderma arundinaceum.